The following is a 215-amino-acid chain: Probable transaldolase (215 aa).

K83 functions as the Schiff-base intermediate with substrate in the catalytic mechanism.

This sequence belongs to the transaldolase family. Type 3B subfamily.

It is found in the cytoplasm. The catalysed reaction is D-sedoheptulose 7-phosphate + D-glyceraldehyde 3-phosphate = D-erythrose 4-phosphate + beta-D-fructose 6-phosphate. It functions in the pathway carbohydrate degradation; pentose phosphate pathway; D-glyceraldehyde 3-phosphate and beta-D-fructose 6-phosphate from D-ribose 5-phosphate and D-xylulose 5-phosphate (non-oxidative stage): step 2/3. Functionally, transaldolase is important for the balance of metabolites in the pentose-phosphate pathway. This Methanococcus maripaludis (strain C6 / ATCC BAA-1332) protein is Probable transaldolase.